A 683-amino-acid chain; its full sequence is DNA-directed RNA polymerase subunit beta' (683 aa).

4 residues coordinate Zn(2+): Cys-69, Cys-71, Cys-87, and Cys-90. The Mg(2+) site is built by Asp-489, Asp-491, and Asp-493.

The protein belongs to the RNA polymerase beta' chain family. RpoC1 subfamily. In plastids the minimal PEP RNA polymerase catalytic core is composed of four subunits: alpha, beta, beta', and beta''. When a (nuclear-encoded) sigma factor is associated with the core the holoenzyme is formed, which can initiate transcription. It depends on Mg(2+) as a cofactor. Zn(2+) serves as cofactor.

The protein resides in the plastid. The protein localises to the chloroplast. The catalysed reaction is RNA(n) + a ribonucleoside 5'-triphosphate = RNA(n+1) + diphosphate. Its function is as follows. DNA-dependent RNA polymerase catalyzes the transcription of DNA into RNA using the four ribonucleoside triphosphates as substrates. The chain is DNA-directed RNA polymerase subunit beta' from Sorghum bicolor (Sorghum).